The following is a 623-amino-acid chain: V-type proton ATPase catalytic subunit A (623 aa).

252–259 (GAFGCGKT) contributes to the ATP binding site.

This sequence belongs to the ATPase alpha/beta chains family. V-ATPase is a heteromultimeric enzyme composed of a peripheral catalytic V1 complex (main components: subunits A, B, C, D, E, and F) attached to an integral membrane V0 proton pore complex (main component: the proteolipid protein).

It carries out the reaction ATP + H2O + 4 H(+)(in) = ADP + phosphate + 5 H(+)(out). In terms of biological role, catalytic subunit of the peripheral V1 complex of vacuolar ATPase. V-ATPase vacuolar ATPase is responsible for acidifying a variety of intracellular compartments in eukaryotic cells. The chain is V-type proton ATPase catalytic subunit A from Beta vulgaris (Sugar beet).